The sequence spans 335 residues: Nucleoid-associated protein YejK (335 aa).

This sequence belongs to the YejK family.

The protein resides in the cytoplasm. It is found in the nucleoid. This is Nucleoid-associated protein YejK from Shigella dysenteriae serotype 1 (strain Sd197).